Reading from the N-terminus, the 171-residue chain is Large ribosomal subunit protein uL10 (171 aa).

This sequence belongs to the universal ribosomal protein uL10 family. In terms of assembly, part of the ribosomal stalk of the 50S ribosomal subunit. The N-terminus interacts with L11 and the large rRNA to form the base of the stalk. The C-terminus forms an elongated spine to which L12 dimers bind in a sequential fashion forming a multimeric L10(L12)X complex.

Its function is as follows. Forms part of the ribosomal stalk, playing a central role in the interaction of the ribosome with GTP-bound translation factors. The sequence is that of Large ribosomal subunit protein uL10 from Zymomonas mobilis subsp. mobilis (strain ATCC 31821 / ZM4 / CP4).